The following is a 157-amino-acid chain: Protein EOLA1 (157 aa).

Residues 6-92 form the ASCH domain; the sequence is LSFRQPYAGL…IAGLIDIGET (87 aa).

This sequence belongs to the EOLA family. In terms of assembly, interacts with MT2A.

Functionally, may play a role in cell protection during the inflammatory response. In epithelial cells, negatively regulates IL6 production and apoptosis through the regulation of MT2A expression. This is Protein EOLA1 from Mus musculus (Mouse).